The sequence spans 239 residues: Purine nucleoside phosphorylase DeoD-type (239 aa).

An a purine D-ribonucleoside-binding site is contributed by His5. Phosphate contacts are provided by residues Gly21, Arg25, Arg44, and 88-91 (RVGS). A purine D-ribonucleoside contacts are provided by residues 180-182 (EME) and 204-205 (SD). Asp205 serves as the catalytic Proton donor.

Belongs to the PNP/UDP phosphorylase family. Homohexamer; trimer of homodimers.

The enzyme catalyses a purine D-ribonucleoside + phosphate = a purine nucleobase + alpha-D-ribose 1-phosphate. The catalysed reaction is a purine 2'-deoxy-D-ribonucleoside + phosphate = a purine nucleobase + 2-deoxy-alpha-D-ribose 1-phosphate. Functionally, catalyzes the reversible phosphorolytic breakdown of the N-glycosidic bond in the beta-(deoxy)ribonucleoside molecules, with the formation of the corresponding free purine bases and pentose-1-phosphate. The sequence is that of Purine nucleoside phosphorylase DeoD-type from Citrobacter koseri (strain ATCC BAA-895 / CDC 4225-83 / SGSC4696).